A 253-amino-acid polypeptide reads, in one-letter code: 2-C-methyl-D-erythritol 4-phosphate cytidylyltransferase (253 aa).

Belongs to the IspD/TarI cytidylyltransferase family. IspD subfamily.

The enzyme catalyses 2-C-methyl-D-erythritol 4-phosphate + CTP + H(+) = 4-CDP-2-C-methyl-D-erythritol + diphosphate. The protein operates within isoprenoid biosynthesis; isopentenyl diphosphate biosynthesis via DXP pathway; isopentenyl diphosphate from 1-deoxy-D-xylulose 5-phosphate: step 2/6. Its function is as follows. Catalyzes the formation of 4-diphosphocytidyl-2-C-methyl-D-erythritol from CTP and 2-C-methyl-D-erythritol 4-phosphate (MEP). The polypeptide is 2-C-methyl-D-erythritol 4-phosphate cytidylyltransferase (Chlorobium chlorochromatii (strain CaD3)).